The following is an 82-amino-acid chain: Large ribosomal subunit protein bL31B (82 aa).

This sequence belongs to the bacterial ribosomal protein bL31 family. Type B subfamily. Part of the 50S ribosomal subunit.

The protein is Large ribosomal subunit protein bL31B of Acinetobacter baylyi (strain ATCC 33305 / BD413 / ADP1).